Consider the following 913-residue polypeptide: Valine--tRNA ligase (913 aa).

The short motif at 49 to 59 (PNVTGNLHLGH) is the 'HIGH' region element. The 'KMSKS' region motif lies at 544–548 (KMSKS). An ATP-binding site is contributed by K547. Residues 851–912 (DWVKKQQKRL…ERLEGVLAQL (62 aa)) are a coiled coil.

The protein belongs to the class-I aminoacyl-tRNA synthetase family. ValS type 1 subfamily. As to quaternary structure, monomer.

It localises to the cytoplasm. It catalyses the reaction tRNA(Val) + L-valine + ATP = L-valyl-tRNA(Val) + AMP + diphosphate. Functionally, catalyzes the attachment of valine to tRNA(Val). As ValRS can inadvertently accommodate and process structurally similar amino acids such as threonine, to avoid such errors, it has a 'posttransfer' editing activity that hydrolyzes mischarged Thr-tRNA(Val) in a tRNA-dependent manner. This is Valine--tRNA ligase from Deinococcus radiodurans (strain ATCC 13939 / DSM 20539 / JCM 16871 / CCUG 27074 / LMG 4051 / NBRC 15346 / NCIMB 9279 / VKM B-1422 / R1).